Here is a 79-residue protein sequence, read N- to C-terminus: Small ribosomal subunit protein uS17 (79 aa).

This sequence belongs to the universal ribosomal protein uS17 family. In terms of assembly, part of the 30S ribosomal subunit.

One of the primary rRNA binding proteins, it binds specifically to the 5'-end of 16S ribosomal RNA. This is Small ribosomal subunit protein uS17 from Rhodospirillum rubrum (strain ATCC 11170 / ATH 1.1.1 / DSM 467 / LMG 4362 / NCIMB 8255 / S1).